We begin with the raw amino-acid sequence, 269 residues long: Imidazole glycerol phosphate synthase subunit HisF (269 aa).

Residues Asp23 and Asp142 contribute to the active site.

This sequence belongs to the HisA/HisF family. In terms of assembly, heterodimer of HisH and HisF.

The protein localises to the cytoplasm. The catalysed reaction is 5-[(5-phospho-1-deoxy-D-ribulos-1-ylimino)methylamino]-1-(5-phospho-beta-D-ribosyl)imidazole-4-carboxamide + L-glutamine = D-erythro-1-(imidazol-4-yl)glycerol 3-phosphate + 5-amino-1-(5-phospho-beta-D-ribosyl)imidazole-4-carboxamide + L-glutamate + H(+). It participates in amino-acid biosynthesis; L-histidine biosynthesis; L-histidine from 5-phospho-alpha-D-ribose 1-diphosphate: step 5/9. Functionally, IGPS catalyzes the conversion of PRFAR and glutamine to IGP, AICAR and glutamate. The HisF subunit catalyzes the cyclization activity that produces IGP and AICAR from PRFAR using the ammonia provided by the HisH subunit. The protein is Imidazole glycerol phosphate synthase subunit HisF of Bordetella parapertussis (strain 12822 / ATCC BAA-587 / NCTC 13253).